The sequence spans 850 residues: Pro-neuregulin-2, membrane-bound isoform (850 aa).

The disordered stretch occupies residues 1–96 (MRQVCCSALP…AAAAGGMRRD (96 aa)). The propeptide occupies 1–111 (MRQVCCSALP…SMLLFGVSLA (111 aa)). A compositionally biased stretch (low complexity) spans 20 to 59 (SSYSDSSSSSSERSSSSSSSSSESGSSSRSSSNNSSISRP). Asparagine 52 and asparagine 53 each carry an N-linked (GlcNAc...) asparagine glycan. Positions 60 to 74 (AAPPEPRPQQQPQPR) are enriched in pro residues. Low complexity predominate over residues 75–92 (SPAARRAAARSRAAAAGG). At 112-405 (CYSPSLKSVQ…QKAEELYQKR (294 aa)) the chain is on the extracellular side. Asparagine 147, asparagine 278, and asparagine 346 each carry an N-linked (GlcNAc...) asparagine glycan. The Ig-like C2-type domain occupies 237-332 (PKLKKMKSQT…RGRLYVNSVS (96 aa)). Intrachain disulfides connect cysteine 257-cysteine 311, cysteine 345-cysteine 359, cysteine 353-cysteine 370, and cysteine 372-cysteine 381. One can recognise an EGF-like domain in the interval 341 to 382 (HARKCNETAKSYCVNGGVCYYIEGINQLSCKCPNGFFGQRCL). The chain crosses the membrane as a helical span at residues 406 to 426 (VLTITGICVALLVVGIVCVVA). Residues 427–850 (YCKTKKQRKQ…PRAKQDSAPL (424 aa)) are Cytoplasmic-facing. Disordered stretches follow at residues 492-535 (TFSG…DSQS), 566-585 (EERR…SLRD), 647-681 (LLRH…YYPA), 700-788 (LPAS…DGAL), and 801-850 (AHDA…SAPL). Positions 494-506 (SGSHSCSPSHHCS) are enriched in low complexity. Residues 514-527 (HRHESHTWSLERSE) are compositionally biased toward basic and acidic residues. Positions 651-665 (PAPPGPGPGPGPGPG) are enriched in pro residues. Over residues 750 to 767 (GLAAQRARAARDSLSLSS) the composition is skewed to low complexity.

Belongs to the neuregulin family. In terms of assembly, interacts with ERBB3 and ERBB4. In terms of processing, proteolytic cleavage close to the plasma membrane on the external face leads to the release of the soluble growth factor form. Extensive glycosylation precedes the proteolytic cleavage. Restricted to the cerebellum in the adult.

The protein resides in the cell membrane. It localises to the secreted. Functionally, direct ligand for ERBB3 and ERBB4 tyrosine kinase receptors. Concomitantly recruits ERBB1 and ERBB2 coreceptors, resulting in ligand-stimulated tyrosine phosphorylation and activation of the ERBB receptors. May also promote the heterodimerization with the EGF receptor. The chain is Pro-neuregulin-2, membrane-bound isoform (NRG2) from Homo sapiens (Human).